A 409-amino-acid chain; its full sequence is Probable ATP-dependent RNA helicase MG308 homolog (409 aa).

In terms of domain architecture, Helicase ATP-binding spans 26-179; sequence VFKVWPRQNV…RKQVAPLTVV (154 aa). ATP is bound at residue 39–46; the sequence is AETGSGKT. Positions 126–129 match the DEVD box motif; the sequence is DEVD. In terms of domain architecture, Helicase C-terminal spans 190–349; it reads LVKHFLLNLN…SVHLERDGTL (160 aa).

Belongs to the DEAD box helicase family.

The enzyme catalyses ATP + H2O = ADP + phosphate + H(+). The protein is Probable ATP-dependent RNA helicase MG308 homolog of Mycoplasma pneumoniae (strain ATCC 29342 / M129 / Subtype 1) (Mycoplasmoides pneumoniae).